The sequence spans 413 residues: Clamp protein VP6 (413 aa).

This sequence belongs to the reoviridae clamp protein family. In terms of assembly, interacts with capsid proteins VP3, VP4 and VP7.

It localises to the virion. In terms of biological role, located at the interface of the incomplete T=13 outer capsid and the pseudo T=2 inner capsid, 120 VP6 subunits clamp and stabilize the inner capsid shell. The polypeptide is Clamp protein VP6 (S8) (Ctenopharyngodon idella (Grass carp)).